A 434-amino-acid chain; its full sequence is AEVCYSHLGCFSDEKPWAGTSQRPIKSLPSDPKKINTRFLLYTNENQNSYQLITATDIATIKASNFNLNRKTRFIIHGFTDSGENSWLSDMCKNMFQVEKVNCICVDWKGGSKAQYSQASQNIRVVGAEVAYLVQVLSTSLNYAPENVHIIGHSLGAHTAGEAGKRLNGLVGRITGLDPAEPYFQDTPEEVRLDPSDAKFVDVIHTDISPILPSLGFGMSQKVGHMDFFPNGGKDMPGCKTGISCNHHRSIEYYHSSILNPEGFLGYPCASYDEFQESGCFPCPAKGCPKMGHFADQYPGKTNAVEQTFFLNTGASDNFTRWRYKVTVTLSGEKDPSGNINVALLGKNGNSAQYQVFKGTLKPDASYTNSIDVELNVGTIQKVTFLWKRSGISVSKPKMGASRITVQSGKDGTKYNFCSSDIVQENVEQTLSPC.

The cysteines at positions 4 and 10 are disulfide-linked. A required for galactolipase activity region spans residues 76-88 (IHGFTDSGENSWL). A disulfide bridge connects residues Cys92 and Cys103. The active-site Nucleophile is the Ser154. The active-site Charge relay system is Asp178. Ca(2+) is bound by residues Glu189, Arg192, Asp194, and Asp197. A disulfide bond links Cys239 and Cys245. Residues 240 to 244 (KTGIS) form a required for galactolipase activity region. His247 (charge relay system) is an active-site residue. Cystine bridges form between Cys269-Cys280 and Cys283-Cys288. N-linked (GlcNAc...) asparagine glycosylation is present at Asn318. The PLAT domain maps to 322 to 434 (WRYKVTVTLS…ENVEQTLSPC (113 aa)). Cys418 and Cys434 are oxidised to a cystine.

It belongs to the AB hydrolase superfamily. Lipase family. Pancreas.

The protein resides in the secreted. It is found in the zymogen granule membrane. Its subcellular location is the cell projection. It localises to the neuron projection. It carries out the reaction a triacylglycerol + H2O = a diacylglycerol + a fatty acid + H(+). The catalysed reaction is a 1,2-diacyl-3-O-(beta-D-galactosyl)-sn-glycerol + 2 H2O = 3-beta-D-galactosyl-sn-glycerol + 2 a fatty acid + 2 H(+). It catalyses the reaction 1,2,3-tri-(9Z-octadecenoyl)-glycerol + H2O = di-(9Z)-octadecenoylglycerol + (9Z)-octadecenoate + H(+). The enzyme catalyses di-(9Z)-octadecenoylglycerol + H2O = (9Z-octadecenoyl)-glycerol + (9Z)-octadecenoate + H(+). It carries out the reaction (9Z-octadecenoyl)-glycerol + H2O = glycerol + (9Z)-octadecenoate + H(+). The catalysed reaction is 1-(9Z-octadecenoyl)-glycerol + H2O = glycerol + (9Z)-octadecenoate + H(+). It catalyses the reaction 1,2,3-tripropanoylglycerol + H2O = dipropanoylglycerol + propanoate + H(+). The enzyme catalyses 1,2,3-tributanoylglycerol + H2O = dibutanoylglycerol + butanoate + H(+). It carries out the reaction 1,2,3-trioctanoylglycerol + H2O = dioctanoylglycerol + octanoate + H(+). The catalysed reaction is 1,2-didecanoylglycerol + H2O = decanoylglycerol + decanoate + H(+). It catalyses the reaction long chain 1,2-diacyl-3-O-beta-D-galactosyl-sn-glycerol + H2O = long chain acyl-3-O-beta-D-galactosyl-sn-glycerol + a fatty acid + H(+). The enzyme catalyses 1,2-dioctanoyl-3-O-beta-D-galactosyl-sn-glycerol + H2O = octanoyl-3-(beta-D-galactosyl)-sn-glycerol + octanoate + H(+). It carries out the reaction 1,2-didodecanoyl-3-beta-D-galactosyl-sn-glycerol + H2O = dodecanoyl-3-beta-D-galactosyl-sn-glycerol + dodecanoate + H(+). The catalysed reaction is 1-beta-D-galactosyl-2,3-didodecanoyl-sn-glycerol + H2O = 1-beta-D-galactosyl-dodecanoyl-sn-glycerol + dodecanoate + H(+). It catalyses the reaction a 1,2-diacyl-3-O-[alpha-D-galactosyl-(1-&gt;6)-beta-D-galactosyl]-sn-glycerol + H2O = acyl-3-O-[alpha-D-galactosyl-(1-&gt;6)-beta-D-galactosyl]-sn-glycerol + a fatty acid + H(+). The enzyme catalyses long chain 1,2-diacyl-3-O-[alpha-D-galactosyl-(1-&gt;6)-beta-D-galactosyl]-sn-glycerol + H2O = long chain acyl-3-O-[alpha-D-galactosyl-(1-&gt;6)-beta-D-galactosyl]-sn-glycerol + a fatty acid + H(+). It carries out the reaction 1,2-dioctanoyl-3-O-[alpha-D-galactosyl-(1-&gt;6)-beta-D-galactosyl]-sn-glycerol + H2O = octanoyl-3-O-[alpha-D-galactosyl-(1-&gt;6)-beta-D-galactosyl]-sn-glycerol + octanoate + H(+). The catalysed reaction is 1,2-didodecanoyl-3-O-[alpha-D-galactosyl-(1-&gt;6)-beta-D-galactosyl]-sn-glycerol + H2O = dodecanoyl-3-O-[alpha-D-galactosyl-(1-&gt;6)-beta-D-galactosyl]-sn-glycerol + dodecanoate + H(+). It catalyses the reaction a 1,2-diacyl-sn-glycero-3-phosphocholine + H2O = a monoacyl-sn-glycero-3-phosphocholine + a fatty acid + H(+). It participates in glycerolipid metabolism; triacylglycerol degradation. Its pathway is glycolipid metabolism. Its activity is regulated as follows. CLPS stimulates triacylglycerol lipase activity. Not inhibited by bile salts. Functionally, lipase that primarily hydrolyzes triglycerides and galactosylglycerides. In neonates, may play a major role in pancreatic digestion of dietary fats such as milk fat globules enriched in long-chain triglycerides. Hydrolyzes short-, medium- and long-chain fatty acyls in triglycerides without apparent positional specificity. Can completely deacylate triacylglycerols. When the liver matures and bile salt synthesis increases, likely functions mainly as a galactolipase and monoacylglycerol lipase. Hydrolyzes monogalactosyldiglycerols (MGDG) and digalactosyldiacylglycerols (DGDG) present in a plant-based diet, releasing long-chain polyunsaturated fatty acids. Hydrolyzes medium- and long-chain fatty acyls in galactolipids. May act together with LIPF to hydrolyze partially digested triglycerides. Hydrolyzes long-chain monoglycerides with high efficiency. In cytotoxic T cells, contributes to perforin-dependent cell lysis, but is unlikely to mediate direct cytotoxicity. Also has low phospholipase activity. In neurons, required for the localization of the phospholipid 1-oleoyl-2-palmitoyl-PC (OPPC) to neurite tips through acyl chain remodeling of membrane phospholipids. The resulting OPPC-rich lipid membrane domain recruits the t-SNARE protein STX4 by selectively interacting with the STX4 transmembrane domain and this promotes surface expression of the dopamine transporter SLC6A3/DAT at neurite tips by facilitating fusion of SLC6A3-containing transport vesicles with the plasma membrane. The chain is Pancreatic lipase-related protein 2 from Cavia porcellus (Guinea pig).